A 48-amino-acid polypeptide reads, in one-letter code: Sperm protamine P1 (48 aa).

Belongs to the protamine P1 family. In terms of tissue distribution, testis.

Its subcellular location is the nucleus. It localises to the chromosome. Its function is as follows. Protamines substitute for histones in the chromatin of sperm during the haploid phase of spermatogenesis. They compact sperm DNA into a highly condensed, stable and inactive complex. The chain is Sperm protamine P1 (PRM1) from Corynorhinus townsendii (Townsend's big-eared bat).